We begin with the raw amino-acid sequence, 361 residues long: Phospho-N-acetylmuramoyl-pentapeptide-transferase (361 aa).

The next 10 helical transmembrane spans lie at 28–48 (LAIIITLSLSFITGPILIEFL), 74–94 (TMGGIMIILSSCLSTLLLADL), 99–119 (IWITLFGFISFGIIGFMDDYA), 133–153 (SKLLLQGIISVIICVLLEYLD), 168–188 (LSLDLGYCYIVFAIFVIVGSS), 203–223 (VPIAFTAGSFALISYLVGNLI), 236–256 (TGELTVLCAGLVGSCLGFLWF), 263–283 (VFMGDTGSLSLGGVLGIISVI), 288–308 (IVLAIVGGLFVIETASVILQV), and 338–358 (KVVIRFWIISVIFALIGLSSL).

Belongs to the glycosyltransferase 4 family. MraY subfamily. Mg(2+) serves as cofactor.

It is found in the cell membrane. The enzyme catalyses UDP-N-acetyl-alpha-D-muramoyl-L-alanyl-gamma-D-glutamyl-meso-2,6-diaminopimeloyl-D-alanyl-D-alanine + di-trans,octa-cis-undecaprenyl phosphate = di-trans,octa-cis-undecaprenyl diphospho-N-acetyl-alpha-D-muramoyl-L-alanyl-D-glutamyl-meso-2,6-diaminopimeloyl-D-alanyl-D-alanine + UMP. The protein operates within cell wall biogenesis; peptidoglycan biosynthesis. In terms of biological role, catalyzes the initial step of the lipid cycle reactions in the biosynthesis of the cell wall peptidoglycan: transfers peptidoglycan precursor phospho-MurNAc-pentapeptide from UDP-MurNAc-pentapeptide onto the lipid carrier undecaprenyl phosphate, yielding undecaprenyl-pyrophosphoryl-MurNAc-pentapeptide, known as lipid I. This Rickettsia rickettsii protein is Phospho-N-acetylmuramoyl-pentapeptide-transferase.